The sequence spans 147 residues: UPF0735 ACT domain-containing protein GTNG_2535 (147 aa).

One can recognise an ACT domain in the interval 69-144 (TLFFHLEDRS…FVEKVEIVGS (76 aa)).

Belongs to the UPF0735 family.

This chain is UPF0735 ACT domain-containing protein GTNG_2535, found in Geobacillus thermodenitrificans (strain NG80-2).